A 445-amino-acid polypeptide reads, in one-letter code: Gamma conglutin 2 (445 aa).

The signal sequence occupies residues 1–33; that stretch reads MAQNMAPIFHFIAISLSCSFLFVLSSSQDSQSL. Residues 60-425 form the Peptidase A1 domain; the sequence is HWANIHKRTP…DFAKSRVEFN (366 aa). 5 disulfide bridges follow: Cys88–Cys178, Cys102–Cys115, Cys107–Cys133, Cys118–Cys128, and Cys346–Cys387. The N-linked (GlcNAc...) asparagine glycan is linked to Asn130.

The protein belongs to the peptidase A1 family. In terms of assembly, two-subunit monomeric unit made of alpha and beta subunits coupled by disulfide bonds (at pH 4.5 and under non-reducing conditions). Can also form oligomers including dimer, tetramer and cyclic hexamer (trimer of dimers) (at pH &gt; 5.5). Component of globulins complexes which accumulate in seeds. Interacts with flavonoids (e.g. apigenin glucosides) present in globulins complexes. Glycosylated on alpha chain.

It is found in the secreted. It localises to the extracellular space. Sulfur-rich seed storage protein that remains undegraded at germination. In Lupinus angustifolius (Narrow-leaved blue lupine), this protein is Gamma conglutin 2.